Consider the following 843-residue polypeptide: MPLSYQHFRKLLLLDDEAGPLEEELPRLADEGLNHRVAEDLNLGNPNVSIPWTHKVGNFTGLYSSTVPVFNPEWQTPSFPDIHLQEDIVDRCKQFVGPLTVNENRRLKLIMPARFYPNVTKYLPLDKGIKPYYPEHVVNHYFQTRHYLHTLWKAGILYKRESTHSASFCGSPYSWEQDLQHGRLVFQTSKRHGDKSFCPQSPGILPRSSVGPCIQSQLRKSRLGPQPTQGQLAGRPQGGSGSIRARIHPSPWGTVGVEPSGSGHTHICASSSSSCLHQSAVRTAAYSPISTSKGHSSSGHAVELHHFPPNSSRSQSQGSVLSCWWLQFRNSKPCSEYCLSHIVNLIEDWGPCAEHGEHRIRTPRTPARVTGGVFLVDKNPHNTTESRLVVDFSQFSRGNTRVSWPKFAVPNLQSLTNLLSSNLSWLSLDVSAAFYHLPLHPAAMPHLLVGSSGLSRYVARLSSNSRIINHQHGTMQDLHNSCSRNLYVSLMLLYKTYGWKLHLYSHPIILGFRKIPMGVGLSPFLLAQFTSAICSVVRRAFPHCLAFSYMDDVVLGAKSVQHLESLYAAVTNFLLSLGIHLNPNKTKRWGYSLNFMGYVIGSWGTWPQDHIVQNFKLCFRKLPVNRPIDWKVCQRIVGLLGFAAPFTQCGYPALMPLYACIQAKQAFTFSPTYKAFLSKQYMTLYPVARQRPGLCQVFADATPTGWGLAIGHQRMRGTFVSPLPIHTAELLAACFARSRSGANLIGTDNSVVLSRKYTSFPWLLGCAANWILRGTSFVYVPSALNPADDPSRGRLGLYRPLLRLPYRPTTGRTSLYADSPSVPSHLPDRVHFASPLHVAWRPP.

The tract at residues 1–177 (MPLSYQHFRK…FCGSPYSWEQ (177 aa)) is terminal protein domain (TP). The spacer stretch occupies residues 178 to 346 (DLQHGRLVFQ…YCLSHIVNLI (169 aa)). 2 disordered regions span residues 219–249 (RKSR…RIHP) and 290–316 (STSK…RSQS). Residues 290–299 (STSKGHSSSG) show a composition bias toward polar residues. A polymerase/reverse transcriptase domain (RT) region spans residues 347–690 (EDWGPCAEHG…YMTLYPVARQ (344 aa)). The Reverse transcriptase domain occupies 357 to 600 (EHRIRTPRTP…YSLNFMGYVI (244 aa)). Mg(2+)-binding residues include aspartate 429, aspartate 551, and aspartate 552.

It belongs to the hepadnaviridae P protein family.

The catalysed reaction is DNA(n) + a 2'-deoxyribonucleoside 5'-triphosphate = DNA(n+1) + diphosphate. The enzyme catalyses Endonucleolytic cleavage to 5'-phosphomonoester.. Its activity is regulated as follows. Activated by host HSP70 and HSP40 in vitro to be able to bind the epsilon loop of the pgRNA. Because deletion of the RNase H region renders the protein partly chaperone-independent, the chaperones may be needed indirectly to relieve occlusion of the RNA-binding site by this domain. Inhibited by several reverse-transcriptase inhibitors: Lamivudine, Adefovir and Entecavir. Multifunctional enzyme that converts the viral RNA genome into dsDNA in viral cytoplasmic capsids. This enzyme displays a DNA polymerase activity that can copy either DNA or RNA templates, and a ribonuclease H (RNase H) activity that cleaves the RNA strand of RNA-DNA heteroduplexes in a partially processive 3'- to 5'-endonucleasic mode. Neo-synthesized pregenomic RNA (pgRNA) are encapsidated together with the P protein, and reverse-transcribed inside the nucleocapsid. Initiation of reverse-transcription occurs first by binding the epsilon loop on the pgRNA genome, and is initiated by protein priming, thereby the 5'-end of (-)DNA is covalently linked to P protein. Partial (+)DNA is synthesized from the (-)DNA template and generates the relaxed circular DNA (RC-DNA) genome. After budding and infection, the RC-DNA migrates in the nucleus, and is converted into a plasmid-like covalently closed circular DNA (cccDNA). The activity of P protein does not seem to be necessary for cccDNA generation, and is presumably released from (+)DNA by host nuclear DNA repair machinery. This Homo sapiens (Human) protein is Protein P.